Reading from the N-terminus, the 403-residue chain is GPI mannosyltransferase 1 (403 aa).

The Cytoplasmic portion of the chain corresponds to 1–4 (MTGE). The helical transmembrane segment at 5 to 25 (EWGLTVLSFLVRVGFFLFGIY) threads the bilayer. At 26–78 (QDANFKVRYTDIDYFVFHDAAKYVYEGKSPYARDTYRYTPLLSWLLVPNHYFG) the chain is on the lumenal side. Residues 79-99 (WFHLGKVIFVIFDLVTGLIIM) form a helical membrane-spanning segment. Residues 100–110 (KLLNQAISRKR) lie on the Cytoplasmic side of the membrane. Residues 111–131 (ALILESIWLLNPMVITISTRG) form a helical membrane-spanning segment. Position 132 (Asn-132) is a topological domain, lumenal. A helical membrane pass occupies residues 133–149 (AESVLCCLIMFTLFFLQ). Over 150–160 (KSRYTLAGILY) the chain is Cytoplasmic. Residues 161 to 181 (GLSIHFKIYPIIYCIPIAIFI) form a helical membrane-spanning segment. Residues 182–193 (YYNKRNQGPRTQ) lie on the Lumenal side of the membrane. A helical transmembrane segment spans residues 194-214 (LTSLLNIGLSTLTTLLGCGWA). Residues 215–266 (MYKIYGYEFLDQAYLYHLYRTDHRHNFSVWNMLLYLDSANKENGESNLSRYA) lie on the Cytoplasmic side of the membrane. Residues 267-287 (FVPQLLLVLVTGCLEWWNPTF) traverse the membrane as a helical segment. At 288–310 (DNLLRVLFVQTFAFVTYNKVCTS) the chain is on the lumenal side. The chain crosses the membrane as a helical span at residues 311 to 331 (QYFVWYLIFLPFYLSRTHIGW). The Cytoplasmic segment spans residues 332-334 (KKG). A helical transmembrane segment spans residues 335–355 (LLMATLWVGTQGIWLSQGYYL). The Lumenal portion of the chain corresponds to 356-361 (EFEGKN). A helical transmembrane segment spans residues 362–382 (VFYPGLFIASVLFFVTNVWLL). Over 383–403 (GQFITDIKIPTQPTVSNKKNN) the chain is Cytoplasmic.

This sequence belongs to the PIGM family.

The protein localises to the endoplasmic reticulum membrane. Its pathway is glycolipid biosynthesis; glycosylphosphatidylinositol-anchor biosynthesis. In terms of biological role, mannosyltransferase involved in glycosylphosphatidylinositol-anchor biosynthesis. Transfers the first alpha-1,4-mannose to GlcN-acyl-PI during GPI precursor assembly. Required for cell wall integrity. This is GPI mannosyltransferase 1 (GPI14) from Saccharomyces cerevisiae (strain ATCC 204508 / S288c) (Baker's yeast).